We begin with the raw amino-acid sequence, 316 residues long: Nautilin-63 (316 aa).

4 disordered regions span residues I1–G26, P149–F173, D189–S238, and P259–K278. A compositionally biased stretch (low complexity) spans T10 to G26. 3 stretches are compositionally biased toward polar residues: residues T152 to Q163, G207 to S216, and S269 to K278.

Glycosylated; contains mainly glucose, galactose, galactosamine, glucosamine and glucuronic acid. As to expression, component of the acid-soluble organic matrix of nacreous shell layers (at protein level).

The protein localises to the secreted. Functionally, involved in nacre formation. Affects morphology of calcite crystals in vitro but does not inhibit their formation. Binds chitin. This chain is Nautilin-63, found in Nautilus macromphalus (Bellybutton nautilus).